A 566-amino-acid chain; its full sequence is Chaperonin GroEL 1 (566 aa).

ATP contacts are provided by residues 29 to 32 (TIGP), 86 to 90 (DGTTT), G413, and D492. Residues 520-540 (DKPEPPAPAGDGGGDPMGGMG) are disordered. Over residues 529 to 540 (GDGGGDPMGGMG) the composition is skewed to gly residues.

The protein belongs to the chaperonin (HSP60) family. As to quaternary structure, forms a cylinder of 14 subunits composed of two heptameric rings stacked back-to-back. Interacts with the co-chaperonin GroES.

Its subcellular location is the cytoplasm. It catalyses the reaction ATP + H2O + a folded polypeptide = ADP + phosphate + an unfolded polypeptide.. Functionally, together with its co-chaperonin GroES, plays an essential role in assisting protein folding. The GroEL-GroES system forms a nano-cage that allows encapsulation of the non-native substrate proteins and provides a physical environment optimized to promote and accelerate protein folding. This Prochlorococcus marinus (strain MIT 9313) protein is Chaperonin GroEL 1.